A 263-amino-acid polypeptide reads, in one-letter code: Lens fiber major intrinsic protein (263 aa).

The Cytoplasmic segment spans residues 1–9 (MWEFRSFSF). Residues 10 to 29 (WRAVFAEFFGTMFYVFFGLG) traverse the membrane as a helical segment. Residues 30–41 (ASLKWAAGPANV) are Extracellular-facing. Residues 42-59 (LVIALAFGLVLATMVQSI) traverse the membrane as a helical segment. The Cytoplasmic portion of the chain corresponds to 60–61 (GH). Residues 62-77 (VSGAHINPAVTFAFLI) constitute an intramembrane region (discontinuously helical). Positions 68–70 (NPA) match the NPA 1 motif. Topologically, residues 78 to 82 (GSQMS) are cytoplasmic. A helical transmembrane segment spans residues 83-106 (LFRAIFYIAAQLLGAVAGAAVLYG). Topologically, residues 107–127 (VTPAAIRGNLALNTLHPGVSL) are extracellular. Residues 128–148 (GQATTVEIFLTLQFVLCIFAT) form a helical membrane-spanning segment. Topologically, residues 149 to 156 (YDERRNGR) are cytoplasmic. Residues 157–175 (LGSVSLAIGFSLTLGHLFG) form a helical membrane-spanning segment. The Extracellular segment spans residues 176-178 (LYY). Residues 179 to 193 (TGASMNPARSFAPAV) constitute an intramembrane region (discontinuously helical). Positions 184–186 (NPA) match the NPA 2 motif. Residues 194 to 200 (LTRNFTN) are Extracellular-facing. A helical membrane pass occupies residues 201–222 (HWVYWVGPIIGGALGGLVYDFI). Residues 223–263 (LFPRMRGLSERLSILKGARPAEPEGQQEATGEPIELKTQSL) lie on the Cytoplasmic side of the membrane. Positions 227–237 (MRGLSERLSIL) are interaction with CALM. The tract at residues 241-263 (RPAEPEGQQEATGEPIELKTQSL) is disordered.

This sequence belongs to the MIP/aquaporin (TC 1.A.8) family. In terms of assembly, homotetramer; each monomer provides an independent water pore. Two homotetramers on opposing membranes can dimerize, forming a cell-cell junction. Interacts with CALM; the calcium-calmodulin/CALM complex interacts with the cytoplasmic domains of two aquaporins, leading to channel closure.

Its subcellular location is the cell membrane. It is found in the cell junction. The catalysed reaction is H2O(in) = H2O(out). Its activity is regulated as follows. The water channel activity is inhibited by calcium through calmodulin/CALM. Functionally, aquaporins form homotetrameric transmembrane channels, with each monomer independently mediating water transport across the plasma membrane along its osmotic gradient. Specifically expressed in lens fiber cells, this aquaporin is crucial for maintaining lens water homeostasis and transparency. Beyond water permeability, it also acts as a cell-to-cell adhesion molecule, forming thin junctions between lens fiber cells that are essential for maintaining the ordered structure and transparency of the lens. This is Lens fiber major intrinsic protein from Lithobates pipiens (Northern leopard frog).